Here is a 155-residue protein sequence, read N- to C-terminus: Probable Brix domain-containing ribosomal biogenesis protein (155 aa).

One can recognise a Brix domain in the interval methionine 1–glutamate 155.

Functionally, probably involved in the biogenesis of the ribosome. This Methanococcoides burtonii (strain DSM 6242 / NBRC 107633 / OCM 468 / ACE-M) protein is Probable Brix domain-containing ribosomal biogenesis protein.